The following is a 449-amino-acid chain: Protein adenylyltransferase FICD (449 aa).

A helical transmembrane segment spans residues 15-35 (LLWGWGPILFGLLGSVFVLLL). 2 TPR repeats span residues 96–129 (AKAALQQALEMKKSGKREKAHKLLVHALNMNPEF) and 130–163 (VEALTELGTILEEEKDVVQADHLYTKALAISPCH). An Inhibitory (S/T)XXXE(G/N) motif motif is present at residues 220–225 (TVAIEG). ATP-binding positions include E224, 250 to 251 (EQ), 358 to 360 (GNG), and R364. In terms of domain architecture, Fido spans 275–410 (ITVNDILEIH…VRPFIRFIAK (136 aa)).

The protein belongs to the fic family.

Its subcellular location is the membrane. The enzyme catalyses L-tyrosyl-[protein] + ATP = O-(5'-adenylyl)-L-tyrosyl-[protein] + diphosphate. It carries out the reaction L-threonyl-[protein] + ATP = 3-O-(5'-adenylyl)-L-threonyl-[protein] + diphosphate. Adenylyltransferase activity is inhibited by the inhibitory helix present at the N-terminus: Glu-224 binds ATP and competes with ATP-binding at Arg-364, thereby preventing adenylyltransferase activity. Activation dissociates ATP-binding from Glu-224, allowing ordered binding of the entire ATP moiety with the alpha-phosphate in an orientation that is productive for accepting an incoming target hydroxyl side chain. Adenylyltransferase that mediates the addition of adenosine 5'-monophosphate (AMP) to specific residues of target proteins. The sequence is that of Protein adenylyltransferase FICD (ficd) from Danio rerio (Zebrafish).